Here is a 707-residue protein sequence, read N- to C-terminus: Polyribonucleotide nucleotidyltransferase (707 aa).

The Mg(2+) site is built by D485 and D491. In terms of domain architecture, KH spans 552–611 (PRIHTMKINSDKIKDVIGKGGAVIRALTEETGTTIEIEDDGTIKIAATEGAAAKEAIRRI). Residues 621-689 (GRIYTGKVMR…RQGRIRLSMK (69 aa)) form the S1 motif domain.

It belongs to the polyribonucleotide nucleotidyltransferase family. Component of the RNA degradosome, which is a multiprotein complex involved in RNA processing and mRNA degradation. Requires Mg(2+) as cofactor.

Its subcellular location is the cytoplasm. The enzyme catalyses RNA(n+1) + phosphate = RNA(n) + a ribonucleoside 5'-diphosphate. Its function is as follows. Involved in mRNA degradation. Catalyzes the phosphorolysis of single-stranded polyribonucleotides processively in the 3'- to 5'-direction. The sequence is that of Polyribonucleotide nucleotidyltransferase from Photobacterium profundum (strain SS9).